The primary structure comprises 363 residues: Chorismate synthase (363 aa).

NADP(+) is bound by residues Arg48 and Arg54. Residues 125 to 127 (RSS), 238 to 239 (NA), Gly278, 293 to 297 (KPTSS), and Arg319 each bind FMN.

Belongs to the chorismate synthase family. Homotetramer. It depends on FMNH2 as a cofactor.

The catalysed reaction is 5-O-(1-carboxyvinyl)-3-phosphoshikimate = chorismate + phosphate. It participates in metabolic intermediate biosynthesis; chorismate biosynthesis; chorismate from D-erythrose 4-phosphate and phosphoenolpyruvate: step 7/7. Functionally, catalyzes the anti-1,4-elimination of the C-3 phosphate and the C-6 proR hydrogen from 5-enolpyruvylshikimate-3-phosphate (EPSP) to yield chorismate, which is the branch point compound that serves as the starting substrate for the three terminal pathways of aromatic amino acid biosynthesis. This reaction introduces a second double bond into the aromatic ring system. In Alcanivorax borkumensis (strain ATCC 700651 / DSM 11573 / NCIMB 13689 / SK2), this protein is Chorismate synthase.